A 128-amino-acid polypeptide reads, in one-letter code: uncharacterized protein (128 aa).

Transmembrane regions (helical) follow at residues 19–41 (MAIV…YVGS), 54–71 (LTFL…SIMQ), and 75–97 (PLIA…VDNL).

It is found in the cell membrane. This is an uncharacterized protein from Pasteurella multocida (strain Pm70).